The primary structure comprises 373 residues: MEDFIYYNGKKYRKGYTTGTCAAAAAKACVEMILTQEEVSAVQVTTTGGTILEIPVAYQKFSKDKATAAVQKDGGDDIDATHGMWIFVDVDLTDNAEVVLDGGVGIGRATQKGISVAVGEAAINPAPRKNILATVRESLGENRGAKILVYAPEGEERAKRTMNSNLGIIGGISILGTTGIVTPMSDEGWKKSLSMELEMKRNQGLDQIILVPGNYGDDFVQNTLGFSSGNIVSMSNFVGYMLKETQRLAFKKVLMVGHFGKLVKVSAGIFTTYSKDADARAEILVANLALLGAPLSLLQAVEKCNTTEAAGEFIEEAGFTQVYDVIVQKIKARSERFLKFTKPSVEVDVVTFSTERGLLAATKDIDVLREEWR.

It belongs to the CbiD family.

It catalyses the reaction Co-precorrin-5B + S-adenosyl-L-methionine = Co-precorrin-6A + S-adenosyl-L-homocysteine. It participates in cofactor biosynthesis; adenosylcobalamin biosynthesis; cob(II)yrinate a,c-diamide from sirohydrochlorin (anaerobic route): step 6/10. Catalyzes the methylation of C-1 in cobalt-precorrin-5B to form cobalt-precorrin-6A. The sequence is that of Cobalt-precorrin-5B C(1)-methyltransferase from Listeria monocytogenes serotype 4a (strain HCC23).